A 132-amino-acid polypeptide reads, in one-letter code: Small ribosomal subunit protein uS8 (132 aa).

The protein belongs to the universal ribosomal protein uS8 family. As to quaternary structure, part of the 30S ribosomal subunit. Contacts proteins S5 and S12.

Its function is as follows. One of the primary rRNA binding proteins, it binds directly to 16S rRNA central domain where it helps coordinate assembly of the platform of the 30S subunit. The protein is Small ribosomal subunit protein uS8 of Streptococcus agalactiae serotype V (strain ATCC BAA-611 / 2603 V/R).